A 471-amino-acid chain; its full sequence is Glutamate--tRNA ligase 1 (471 aa).

The 'HIGH' region signature appears at 15-25 (PSPTGYLHIGG). The short motif at 243–247 (KLSKR) is the 'KMSKS' region element. Lys246 contributes to the ATP binding site.

Belongs to the class-I aminoacyl-tRNA synthetase family. Glutamate--tRNA ligase type 1 subfamily. Monomer.

Its subcellular location is the cytoplasm. It catalyses the reaction tRNA(Glu) + L-glutamate + ATP = L-glutamyl-tRNA(Glu) + AMP + diphosphate. Catalyzes the attachment of glutamate to tRNA(Glu) in a two-step reaction: glutamate is first activated by ATP to form Glu-AMP and then transferred to the acceptor end of tRNA(Glu). In Cereibacter sphaeroides (strain ATCC 17029 / ATH 2.4.9) (Rhodobacter sphaeroides), this protein is Glutamate--tRNA ligase 1.